The following is a 589-amino-acid chain: MNPSSSPNRSLNPTRGLNLYSTGNEVTWFSSTVDEVNELKPAKSKAFSISAQDQIYGTSSLKSRFSTHEASSEKDDSSDFTLVLPSNRMYIVIPGLMLSIFLSALDQTVITTAIPTIVANLDGGSSYSWIGTAYTLAQTSILPFCGIMSEVVGRKIVLYTSIVLFLFGSAMCGAAQNMLWLVLCRAVQGIGGGGITSLVTIVIADITPLQTRPYYTGCMGVTWGLASVMGPLIGGAISQKASWRWIFFINLPTGGLSLALLIFFLNLVPKPTVSFRVFLRDFDFVGIITITTGVVLFLVGLNIGSTTGHWAHANVLCYLIFGILCIAGFVVNEFYTTRTRIITPSAFKTLSLTSVMVTSFLHYYIVSTITYYIPVYFQNIKGDGPLMSGVHTLSLAVVSSLLSAVSGMGIGKLKNYRYPMIGGWIVLLAGTGSMIAIYYNTDISRTMGFLALTAVGTGNLFQPNLIAVQASVPPALIATSCSAFMLLRNMGASVGISMGAVIYDQQLTTLLKGTKYSAGLSYSQIASIPNVSEKNFVFNAYANAIRMIWIVNCPVAGVGMLLSFFTKQEKLSQSVTEYKEKDKGFKDAP.

The next 14 membrane-spanning stretches (helical) occupy residues tyrosine 90–isoleucine 110, serine 128–methionine 148, isoleucine 162–valine 182, glycine 189–leucine 209, glycine 217–isoleucine 237, tryptophan 245–leucine 265, phenylalanine 284–glycine 304, alanine 311–valine 331, valine 355–valine 375, valine 390–isoleucine 410, proline 419–tyrosine 439, glycine 448–valine 468, alanine 483–tyrosine 503, and isoleucine 545–phenylalanine 565.

It belongs to the major facilitator superfamily. TCR/Tet family.

Its subcellular location is the membrane. This is an uncharacterized protein from Schizosaccharomyces pombe (strain 972 / ATCC 24843) (Fission yeast).